We begin with the raw amino-acid sequence, 264 residues long: Chymotrypsin-like protease CTRL-1 (264 aa).

The N-terminal stretch at 1 to 18 (MLLLSLTLSLVLLGSSWG) is a signal peptide. Residues 19 to 33 (CGIPAIKPALSFSQR) constitute a propeptide, activation peptide. Disulfide bonds link C19-C141, C60-C76, C155-C220, C187-C201, and C210-C239. The Peptidase S1 domain occupies 34-262 (IVNGENAVLG…FSTWINQVIA (229 aa)). H75 acts as the Charge relay system in catalysis. A glycan (N-linked (GlcNAc...) asparagine) is linked at N114. D121 acts as the Charge relay system in catalysis. S214 functions as the Charge relay system in the catalytic mechanism.

It belongs to the peptidase S1 family.

This is Chymotrypsin-like protease CTRL-1 (CTRL) from Homo sapiens (Human).